The chain runs to 261 residues: General secretion pathway protein N (261 aa).

The Cytoplasmic segment spans residues 1–10 (MRLEMIGLRT). A helical transmembrane segment spans residues 11–31 (WLLATVVGWALLVCVLAVAGL). The Periplasmic portion of the chain corresponds to 32–261 (GKRVELLPDD…QGGSTPGQTQ (230 aa)). Positions 158–261 (VFNGQGGQPP…QGGSTPGQTQ (104 aa)) are disordered. Positions 179–200 (AVPPLPPNVPPAPATPAPPPAE) are enriched in pro residues. Residues 201–211 (VPQQQPGGQAP) show a composition bias toward low complexity. Basic and acidic residues predominate over residues 227-244 (RPSDEQMRAIRERIEARR).

Binds to XpsD.

The protein localises to the cell inner membrane. Its function is as follows. Involved in a general secretion pathway (GSP) for the export of proteins. This Xanthomonas campestris pv. campestris (strain ATCC 33913 / DSM 3586 / NCPPB 528 / LMG 568 / P 25) protein is General secretion pathway protein N (xpsN).